The sequence spans 288 residues: MAMSSYLINSNYVDPKFPPCEEYSQSDYLPNHSPDYYSSQRQEPAAFQPDSLYHHHPHQQQRAEPPYTQCQRAGQPASVVMSPRGHVLPPSGLQTTPVPEQSHRCESVTPSPPPPPSCGQTPHSQGASSPASTRKDPVVYPWMKKVHVNIVSSNYTGGEPKRSRTAYTRQQVLELEKEFHYNRYLTRRRRVEIAHTLCLSERQIKIWFQNRRMKWKKDHKLPNTKVRSGSTNTNSQVLTGFPKPHWTPIAGRDTCMIYAPSLAVPDCETECRSGSHASDHPSLHFGPE.

The interval 10 to 136 (SNYVDPKFPP…ASSPASTRKD (127 aa)) is disordered. Over residues 118–132 (CGQTPHSQGASSPAS) the composition is skewed to polar residues. The Antp-type hexapeptide signature appears at 139–144 (VYPWMK). The homeobox DNA-binding region spans 160–219 (PKRSRTAYTRQQVLELEKEFHYNRYLTRRRRVEIAHTLCLSERQIKIWFQNRRMKWKKDH).

The protein belongs to the Antp homeobox family. Deformed subfamily.

It localises to the nucleus. Sequence-specific transcription factor which is part of a developmental regulatory system that provides cells with specific positional identities on the anterior-posterior axis. The sequence is that of Homeobox protein Hox-B4a (hoxb4a) from Takifugu rubripes (Japanese pufferfish).